The primary structure comprises 61 residues: Metallothionein-1M (61 aa).

Residues Met-1–Cys-29 form a beta region. A divalent metal cation is bound by residues Cys-5, Cys-7, Cys-13, Cys-15, Cys-19, Cys-21, Cys-24, Cys-26, Cys-29, Cys-33, Cys-34, Cys-36, Cys-37, Cys-41, Cys-44, Cys-48, Cys-50, Cys-57, Cys-59, and Cys-60. An alpha region spans residues Lys-30 to Ala-61.

This sequence belongs to the metallothionein superfamily. Type 1 family. Monomer.

In terms of biological role, metallothioneins have a high content of cysteine residues that bind various heavy metals; these proteins are transcriptionally regulated by both heavy metals and glucocorticoids. The sequence is that of Metallothionein-1M (MT1M) from Homo sapiens (Human).